The following is a 179-amino-acid chain: Large ribosomal subunit protein uL5 (179 aa).

Lys3 bears the N6-acetyllysine mark.

This sequence belongs to the universal ribosomal protein uL5 family. Part of the 50S ribosomal subunit; part of the 5S rRNA/L5/L18/L25 subcomplex. Contacts the 5S rRNA and the P site tRNA. Forms a bridge to the 30S subunit in the 70S ribosome.

Its function is as follows. This is one of the proteins that bind and probably mediate the attachment of the 5S RNA into the large ribosomal subunit, where it forms part of the central protuberance. In the 70S ribosome it contacts protein S13 of the 30S subunit (bridge B1b), connecting the 2 subunits; this bridge is implicated in subunit movement. Contacts the P site tRNA; the 5S rRNA and some of its associated proteins might help stabilize positioning of ribosome-bound tRNAs. The chain is Large ribosomal subunit protein uL5 from Escherichia coli O45:K1 (strain S88 / ExPEC).